Consider the following 212-residue polypeptide: Peptide methionine sulfoxide reductase MsrA (212 aa).

Cysteine 52 is an active-site residue.

This sequence belongs to the MsrA Met sulfoxide reductase family.

It catalyses the reaction L-methionyl-[protein] + [thioredoxin]-disulfide + H2O = L-methionyl-(S)-S-oxide-[protein] + [thioredoxin]-dithiol. It carries out the reaction [thioredoxin]-disulfide + L-methionine + H2O = L-methionine (S)-S-oxide + [thioredoxin]-dithiol. Functionally, has an important function as a repair enzyme for proteins that have been inactivated by oxidation. Catalyzes the reversible oxidation-reduction of methionine sulfoxide in proteins to methionine. This is Peptide methionine sulfoxide reductase MsrA from Salmonella paratyphi A (strain AKU_12601).